The chain runs to 158 residues: Transcriptional repressor NrdR (158 aa).

A zinc finger lies at 3 to 34 (CPYCQSEDTQVKDSRPAEDGAVIRRRRVCSVC). The ATP-cone domain occupies 49 to 139 (LMVVKKSGRR…VYRNFSKAVD (91 aa)).

Belongs to the NrdR family. It depends on Zn(2+) as a cofactor.

Functionally, negatively regulates transcription of bacterial ribonucleotide reductase nrd genes and operons by binding to NrdR-boxes. The sequence is that of Transcriptional repressor NrdR from Brucella abortus (strain S19).